We begin with the raw amino-acid sequence, 194 residues long: PPE family protein PPE41 (194 aa).

It belongs to the mycobacterial PPE family. As to quaternary structure, forms a heterodimer with PE25. The dimer forms a 1:1:1 heterotrimeric complex with EspG5. PPE41 interacts directly with EspG5.

It localises to the secreted. It is found in the cell surface. In terms of biological role, the PE25/PPE41 dimer induces both a strong humoral and cellular immune response. The dimer induces necrosis, but not apoptosis, in mouse macrophage cells. It also induces activation and maturation of mouse dendritic cells and drives Th2-biased immune responses. In Mycobacterium tuberculosis (strain ATCC 25618 / H37Rv), this protein is PPE family protein PPE41.